Reading from the N-terminus, the 327-residue chain is Interleukin-12 subunit beta (327 aa).

The signal sequence occupies residues 1 to 22 (MHPQQLVVSWFSLVLLTSPIVA). The Ig-like C2-type domain maps to 23–106 (IWELEKNVYV…LSRSLLLLHK (84 aa)). Cysteines 50 and 90 form a disulfide. Asn223 carries an N-linked (GlcNAc...) asparagine glycan. The region spanning 238-327 (PPKNLQLRPL…WSEWASVSCS (90 aa)) is the Fibronectin type-III domain.

It belongs to the IL-12B family. As to quaternary structure, heterodimer with IL12A; disulfide-linked. The heterodimer is known as interleukin IL-12. Heterodimer with IL23A; disulfide-linked. The heterodimer is known as interleukin IL-23. Also secreted as a monomer. Interacts with NBR1; this interaction promotes IL-12 secretion.

The protein resides in the secreted. Cytokine that can act as a growth factor for activated T and NK cells, enhance the lytic activity of NK/lymphokine-activated killer cells, and stimulate the production of IFN-gamma by resting PBMC. In terms of biological role, associates with IL23A to form the IL-23 interleukin, a heterodimeric cytokine which functions in innate and adaptive immunity. IL-23 may constitute with IL-17 an acute response to infection in peripheral tissues. IL-23 binds to a heterodimeric receptor complex composed of IL12RB1 and IL23R, activates the Jak-Stat signaling cascade, stimulates memory rather than naive T-cells and promotes production of pro-inflammatory cytokines. IL-23 induces autoimmune inflammation and thus may be responsible for autoimmune inflammatory diseases and may be important for tumorigenesis. The protein is Interleukin-12 subunit beta (IL12B) of Cervus elaphus (Red deer).